Consider the following 250-residue polypeptide: Ribosomal RNA small subunit methyltransferase J (250 aa).

Residues 101-102, 117-118, 153-154, and Asp-171 contribute to the S-adenosyl-L-methionine site; these read RD, ER, and SS.

Belongs to the methyltransferase superfamily. RsmJ family.

The protein resides in the cytoplasm. The enzyme catalyses guanosine(1516) in 16S rRNA + S-adenosyl-L-methionine = N(2)-methylguanosine(1516) in 16S rRNA + S-adenosyl-L-homocysteine + H(+). Functionally, specifically methylates the guanosine in position 1516 of 16S rRNA. The sequence is that of Ribosomal RNA small subunit methyltransferase J from Shigella boydii serotype 18 (strain CDC 3083-94 / BS512).